The following is a 338-amino-acid chain: Anthranilate phosphoribosyltransferase (338 aa).

5-phospho-alpha-D-ribose 1-diphosphate contacts are provided by residues G81, 84–85, T89, 91–94, 109–117, and A121; these read GD, NIST, and KHGNRALSS. An anthranilate-binding site is contributed by G81. S93 serves as a coordination point for Mg(2+). N112 lines the anthranilate pocket. An anthranilate-binding site is contributed by R167. Mg(2+) is bound by residues D225 and E226.

The protein belongs to the anthranilate phosphoribosyltransferase family. As to quaternary structure, homodimer. Mg(2+) serves as cofactor.

It catalyses the reaction N-(5-phospho-beta-D-ribosyl)anthranilate + diphosphate = 5-phospho-alpha-D-ribose 1-diphosphate + anthranilate. It participates in amino-acid biosynthesis; L-tryptophan biosynthesis; L-tryptophan from chorismate: step 2/5. In terms of biological role, catalyzes the transfer of the phosphoribosyl group of 5-phosphorylribose-1-pyrophosphate (PRPP) to anthranilate to yield N-(5'-phosphoribosyl)-anthranilate (PRA). In Rhizobium johnstonii (strain DSM 114642 / LMG 32736 / 3841) (Rhizobium leguminosarum bv. viciae), this protein is Anthranilate phosphoribosyltransferase.